A 101-amino-acid polypeptide reads, in one-letter code: uncharacterized protein (101 aa).

A run of 2 helical transmembrane segments spans residues 52 to 72 and 75 to 95; these read VVFIIVFLTGWAAKSIIVKLL and LWRLSTLIPSFFASFFMSLLG.

It is found in the endoplasmic reticulum membrane. This is an uncharacterized protein from Schizosaccharomyces pombe (strain 972 / ATCC 24843) (Fission yeast).